The sequence spans 241 residues: Outer membrane protein A (241 aa).

5 beta stranded membrane passes run 1–8, 13–21, 46–55, 60–67, and 86–94; these read LTAKLSYP, LDIYTRLGG, PVFAGGVEYA, IATRLEYQ, and MLSVGVSYR. Tandem repeats lie at residues 105-106, 107-108, 109-110, and 111-112. The interval 105–112 is 4 X 2 AA tandem repeats of A-P; the sequence is APAPAPAP. An OmpA-like domain is found at 114–241; sequence VQTKHFTLKS…RRVEIEVKGV (128 aa). Cys-215 and Cys-227 are oxidised to a cystine.

The protein belongs to the outer membrane OOP (TC 1.B.6) superfamily. OmpA family. Monomer and homodimer.

The protein localises to the cell outer membrane. In terms of biological role, with TolR probably plays a role in maintaining the position of the peptidoglycan cell wall in the periplasm. Acts as a porin with low permeability that allows slow penetration of small solutes; an internal gate slows down solute passage. This chain is Outer membrane protein A, found in Shimwellia blattae (Escherichia blattae).